The chain runs to 391 residues: Homocysteine-responsive endoplasmic reticulum-resident ubiquitin-like domain member 1 protein (391 aa).

An N-acetylmethionine modification is found at Met1. Residues 1–263 (MESETEPEPV…VEEDDEINRD (263 aa)) lie on the Cytoplasmic side of the membrane. In terms of domain architecture, Ubiquitin-like spans 10–72 (VTLLVKSPNQ…LLDHQCLRDL (63 aa)). The tract at residues 100–126 (KVAESTEEPAGSNRGQYPEDSSSDGLR) is disordered. Over residues 112–124 (NRGQYPEDSSSDG) the composition is skewed to polar residues. Residues 115–200 (QYPEDSSSDG…ASGAFVPPPS (86 aa)) form an interaction with UBQLN1 region. The residue at position 135 (Ser135) is a Phosphoserine. Residues 170–190 (LSWFQQIYARQYYMQYLAATA) form an interaction with SYVN1 region. A helical membrane pass occupies residues 264 to 284 (WLDWTYSAATFSVFLSILYFY). The Lumenal segment spans residues 285–289 (SSLSR). A helical membrane pass occupies residues 290 to 310 (FLMVMGATVVMYLHHVGWFPF). Residues 311–391 (RPRPVQNFPN…LPEGPPAIAN (81 aa)) are Cytoplasmic-facing. Residues 318–359 (FPNDGPPPDVVNQDPNNNLQEGTDPETEDPNHLPPDRDVLDG) form a disordered region. Residues 346-357 (DPNHLPPDRDVL) show a composition bias toward basic and acidic residues.

Interacts with PSEN1 and PSEN2. Interacts with UBXN6. Interacts with UBQLN1, UBQLN2 and UBQLN4. Component of the HRD1 complex, which comprises at least SYNV1/HRD1, FAM8A1, HERPUD1/HERP, OS9, SEL1L and UBE2J1. FAM8A1 binding to SYNV1 may promote recruitment of HERPUD1 to the HRD1 complex. Widely expressed; in the brain, expression seems to be restricted to neurons and vascular smooth muscle cells. Present in activated microglia in senile plaques in the brain of patients with Alzheimer disease.

The protein localises to the endoplasmic reticulum membrane. Functionally, component of the endoplasmic reticulum quality control (ERQC) system also called ER-associated degradation (ERAD) involved in ubiquitin-dependent degradation of misfolded endoplasmic reticulum proteins. Could enhance presenilin-mediated amyloid-beta protein 40 generation. Binds to ubiquilins and this interaction is required for efficient degradation of CD3D via the ERAD pathway. This Homo sapiens (Human) protein is Homocysteine-responsive endoplasmic reticulum-resident ubiquitin-like domain member 1 protein (HERPUD1).